The chain runs to 268 residues: Tryptophan synthase alpha chain (268 aa).

Catalysis depends on proton acceptor residues Glu-49 and Asp-60.

The protein belongs to the TrpA family. As to quaternary structure, tetramer of two alpha and two beta chains.

The catalysed reaction is (1S,2R)-1-C-(indol-3-yl)glycerol 3-phosphate + L-serine = D-glyceraldehyde 3-phosphate + L-tryptophan + H2O. It functions in the pathway amino-acid biosynthesis; L-tryptophan biosynthesis; L-tryptophan from chorismate: step 5/5. In terms of biological role, the alpha subunit is responsible for the aldol cleavage of indoleglycerol phosphate to indole and glyceraldehyde 3-phosphate. This chain is Tryptophan synthase alpha chain, found in Xylella fastidiosa (strain 9a5c).